The chain runs to 624 residues: Leucine-rich repeat and IQ domain-containing protein 3 (624 aa).

3 LRR repeats span residues 51-72 (SLRVCIFSNNFITDIHPLQSCI), 73-94 (KLIKLDLHGNQIKSLPNTKFWN), and 98-119 (NLKLLYLHDNGFAKLKNICVLS). Positions 132 to 179 (CPVSLKKGYRHVLVNSIWPLKALDHHVISDEEIIQNWHLPERFKACNH) constitute an LRRCT domain. The region spanning 215–244 (HNSPVLIVQRWIRGFLVRKNLSPVFFHKKK) is the IQ domain. Positions 553-614 (KQKLKAEKYR…TKVAIVKTNL (62 aa)) form a coiled coil.

In Homo sapiens (Human), this protein is Leucine-rich repeat and IQ domain-containing protein 3 (LRRIQ3).